The following is a 296-amino-acid chain: tRNA pseudouridine synthase B (296 aa).

Aspartate 38 acts as the Nucleophile in catalysis.

Belongs to the pseudouridine synthase TruB family. Type 1 subfamily.

It catalyses the reaction uridine(55) in tRNA = pseudouridine(55) in tRNA. In terms of biological role, responsible for synthesis of pseudouridine from uracil-55 in the psi GC loop of transfer RNAs. In Ehrlichia ruminantium (strain Gardel), this protein is tRNA pseudouridine synthase B.